We begin with the raw amino-acid sequence, 260 residues long: Ubiquinone/menaquinone biosynthesis C-methyltransferase UbiE (260 aa).

Residues Thr-83, Asp-104, and 132–133 (NA) each bind S-adenosyl-L-methionine.

The protein belongs to the class I-like SAM-binding methyltransferase superfamily. MenG/UbiE family.

It catalyses the reaction a 2-demethylmenaquinol + S-adenosyl-L-methionine = a menaquinol + S-adenosyl-L-homocysteine + H(+). The catalysed reaction is a 2-methoxy-6-(all-trans-polyprenyl)benzene-1,4-diol + S-adenosyl-L-methionine = a 5-methoxy-2-methyl-3-(all-trans-polyprenyl)benzene-1,4-diol + S-adenosyl-L-homocysteine + H(+). It functions in the pathway quinol/quinone metabolism; menaquinone biosynthesis; menaquinol from 1,4-dihydroxy-2-naphthoate: step 2/2. It participates in cofactor biosynthesis; ubiquinone biosynthesis. Methyltransferase required for the conversion of demethylmenaquinol (DMKH2) to menaquinol (MKH2) and the conversion of 2-polyprenyl-6-methoxy-1,4-benzoquinol (DDMQH2) to 2-polyprenyl-3-methyl-6-methoxy-1,4-benzoquinol (DMQH2). This chain is Ubiquinone/menaquinone biosynthesis C-methyltransferase UbiE, found in Bartonella quintana (strain Toulouse) (Rochalimaea quintana).